The chain runs to 158 residues: Transcription elongation factor GreA (158 aa).

The protein belongs to the GreA/GreB family.

In terms of biological role, necessary for efficient RNA polymerase transcription elongation past template-encoded arresting sites. The arresting sites in DNA have the property of trapping a certain fraction of elongating RNA polymerases that pass through, resulting in locked ternary complexes. Cleavage of the nascent transcript by cleavage factors such as GreA or GreB allows the resumption of elongation from the new 3'terminus. GreA releases sequences of 2 to 3 nucleotides. The sequence is that of Transcription elongation factor GreA from Rhizobium leguminosarum bv. trifolii (strain WSM2304).